The following is a 338-amino-acid chain: Aspartate-semialdehyde dehydrogenase (338 aa).

Residues 13 to 16 and 41 to 42 contribute to the NADP(+) site; these read TGNV and NS. Residue Arg101 participates in phosphate binding. Cys132 functions as the Acyl-thioester intermediate in the catalytic mechanism. Gln159 is a substrate binding site. Residue 162–163 participates in NADP(+) binding; sequence SG. A phosphate-binding site is contributed by Lys216. Arg237 is a binding site for substrate. Catalysis depends on His244, which acts as the Proton acceptor. Asn317 contributes to the NADP(+) binding site.

This sequence belongs to the aspartate-semialdehyde dehydrogenase family. Homodimer.

It carries out the reaction L-aspartate 4-semialdehyde + phosphate + NADP(+) = 4-phospho-L-aspartate + NADPH + H(+). The protein operates within amino-acid biosynthesis; L-lysine biosynthesis via DAP pathway; (S)-tetrahydrodipicolinate from L-aspartate: step 2/4. It participates in amino-acid biosynthesis; L-methionine biosynthesis via de novo pathway; L-homoserine from L-aspartate: step 2/3. It functions in the pathway amino-acid biosynthesis; L-threonine biosynthesis; L-threonine from L-aspartate: step 2/5. Its function is as follows. Catalyzes the NADPH-dependent formation of L-aspartate-semialdehyde (L-ASA) by the reductive dephosphorylation of L-aspartyl-4-phosphate. The chain is Aspartate-semialdehyde dehydrogenase from Rickettsia bellii (strain RML369-C).